We begin with the raw amino-acid sequence, 1096 residues long: Carbamoyl phosphate synthase large chain (1096 aa).

A carboxyphosphate synthetic domain region spans residues 1 to 402 (MPKRDDINSV…ALQKALRSLE (402 aa)). The ATP site is built by Arg129, Arg169, Gly175, Gly176, Glu208, Ile210, Glu215, Gly241, Val242, His243, Gln285, and Glu299. The 196-residue stretch at 133 to 328 (KDLVIESGAD…IAKIAAKLAI (196 aa)) folds into the ATP-grasp 1 domain. Residues Gln285, Glu299, and Asn301 each contribute to the Mg(2+) site. Residues Gln285, Glu299, and Asn301 each coordinate Mn(2+). Residues 403–547 (KRGSSFHWGA…YSSYDSETEI (145 aa)) are oligomerization domain. The tract at residues 548–950 (VPSDRRKVII…AFAKSQEAAF (403 aa)) is carbamoyl phosphate synthetic domain. The ATP-grasp 2 domain occupies 676–870 (SGILDAAGLV…LAKAASLVMV (195 aa)). ATP-binding residues include Arg712, Arg754, Leu756, Glu761, Gly786, Ile787, His788, Ser789, Gln829, and Glu841. Residues Gln829, Glu841, and Asn843 each coordinate Mg(2+). 3 residues coordinate Mn(2+): Gln829, Glu841, and Asn843. Residues 951–1095 (GGLPLSGTVF…QDYAIAREAR (145 aa)) form the MGS-like domain. Residues 951–1096 (GGLPLSGTVF…DYAIAREARR (146 aa)) form an allosteric domain region.

It belongs to the CarB family. In terms of assembly, composed of two chains; the small (or glutamine) chain promotes the hydrolysis of glutamine to ammonia, which is used by the large (or ammonia) chain to synthesize carbamoyl phosphate. Tetramer of heterodimers (alpha,beta)4. It depends on Mg(2+) as a cofactor. Mn(2+) serves as cofactor.

It catalyses the reaction hydrogencarbonate + L-glutamine + 2 ATP + H2O = carbamoyl phosphate + L-glutamate + 2 ADP + phosphate + 2 H(+). The enzyme catalyses hydrogencarbonate + NH4(+) + 2 ATP = carbamoyl phosphate + 2 ADP + phosphate + 2 H(+). It functions in the pathway amino-acid biosynthesis; L-arginine biosynthesis; carbamoyl phosphate from bicarbonate: step 1/1. The protein operates within pyrimidine metabolism; UMP biosynthesis via de novo pathway; (S)-dihydroorotate from bicarbonate: step 1/3. Functionally, large subunit of the glutamine-dependent carbamoyl phosphate synthetase (CPSase). CPSase catalyzes the formation of carbamoyl phosphate from the ammonia moiety of glutamine, carbonate, and phosphate donated by ATP, constituting the first step of 2 biosynthetic pathways, one leading to arginine and/or urea and the other to pyrimidine nucleotides. The large subunit (synthetase) binds the substrates ammonia (free or transferred from glutamine from the small subunit), hydrogencarbonate and ATP and carries out an ATP-coupled ligase reaction, activating hydrogencarbonate by forming carboxy phosphate which reacts with ammonia to form carbamoyl phosphate. This is Carbamoyl phosphate synthase large chain from Clavibacter sepedonicus (Clavibacter michiganensis subsp. sepedonicus).